Reading from the N-terminus, the 179-residue chain is Large ribosomal subunit protein uL6 (179 aa).

It belongs to the universal ribosomal protein uL6 family. As to quaternary structure, part of the 50S ribosomal subunit.

In terms of biological role, this protein binds to the 23S rRNA, and is important in its secondary structure. It is located near the subunit interface in the base of the L7/L12 stalk, and near the tRNA binding site of the peptidyltransferase center. The chain is Large ribosomal subunit protein uL6 from Synechococcus sp. (strain WH7803).